A 518-amino-acid chain; its full sequence is Glucose-6-phosphate 1-dehydrogenase (518 aa).

NADP(+) contacts are provided by residues 36–43 (GASGDLAK), Arg70, and Lys169. Residues Lys169, 199-203 (HYLGK), Glu237, and Asp256 contribute to the D-glucose 6-phosphate site. The Proton acceptor role is filled by His261. Arg356 contacts NADP(+). 2 residues coordinate D-glucose 6-phosphate: Lys359 and Arg364. NADP(+) is bound by residues Lys365, Arg369, and Arg392. Gln394 lines the D-glucose 6-phosphate pocket. Residues 400-402 (YFK), 420-422 (DLT), Arg486, Tyr502, and Trp508 each bind NADP(+).

The protein belongs to the glucose-6-phosphate dehydrogenase family.

Its subcellular location is the cytoplasm. It localises to the cytosol. The enzyme catalyses D-glucose 6-phosphate + NADP(+) = 6-phospho-D-glucono-1,5-lactone + NADPH + H(+). The protein operates within carbohydrate degradation; pentose phosphate pathway; D-ribulose 5-phosphate from D-glucose 6-phosphate (oxidative stage): step 1/3. Cytosolic glucose-6-phosphate dehydrogenase that catalyzes the first and rate-limiting step of the oxidative branch within the pentose phosphate pathway/shunt, an alternative route to glycolysis for the dissimilation of carbohydrates and a major source of reducing power and metabolic intermediates for fatty acid and nucleic acid biosynthetic processes. This chain is Glucose-6-phosphate 1-dehydrogenase (Zw), found in Drosophila yakuba (Fruit fly).